A 222-amino-acid chain; its full sequence is Octanoyltransferase (222 aa).

The BPL/LPL catalytic domain maps to 34–214 (AEAPSTVLLL…EFRKHEEALV (181 aa)). Substrate is bound by residues 72-79 (RGGKLTWH), 144-146 (AIG), and 157-159 (GIA). C175 (acyl-thioester intermediate) is an active-site residue.

It belongs to the LipB family.

The protein localises to the cytoplasm. The enzyme catalyses octanoyl-[ACP] + L-lysyl-[protein] = N(6)-octanoyl-L-lysyl-[protein] + holo-[ACP] + H(+). The protein operates within protein modification; protein lipoylation via endogenous pathway; protein N(6)-(lipoyl)lysine from octanoyl-[acyl-carrier-protein]: step 1/2. Functionally, catalyzes the transfer of endogenously produced octanoic acid from octanoyl-acyl-carrier-protein onto the lipoyl domains of lipoate-dependent enzymes. Lipoyl-ACP can also act as a substrate although octanoyl-ACP is likely to be the physiological substrate. The protein is Octanoyltransferase of Arthrobacter sp. (strain FB24).